We begin with the raw amino-acid sequence, 1597 residues long: Replicase large subunit (1597 aa).

The 209-residue stretch at 72-280 (SFTHTQQAVH…HSFSNIIKYV (209 aa)) folds into the Alphavirus-like MT domain. Residues 791 to 950 (LVYSDMGKLK…KLVVDEKEDR (160 aa)) enclose the (+)RNA virus helicase ATP-binding domain. 823-830 (GVPGCGKT) contacts ATP. Positions 951–1103 (RVTLRCPADV…EMYKVESGTQ (153 aa)) constitute a (+)RNA virus helicase C-terminal domain. Residues 1365–1478 (MEILELDISK…YIPKGLDLPD (114 aa)) enclose the RdRp catalytic domain.

Belongs to the tobamovirus RNA-directed RNA polymerase family. In terms of assembly, heterodimer of a large and a small subunit.

The enzyme catalyses RNA(n) + a ribonucleoside 5'-triphosphate = RNA(n+1) + diphosphate. It carries out the reaction ATP + H2O = ADP + phosphate + H(+). Functionally, the replicase large subunit is an RNA-dependent RNA polymerase active in viral RNA replication. The replicase small subunit is a methyltransferase active in RNA capping and an RNA helicase. It also acts as a suppressor of RNA-mediated gene silencing, also known as post-transcriptional gene silencing (PTGS), a mechanism of plant viral defense that limits the accumulation of viral RNAs. May mediate silencing suppression through either inhibition of HEN1-mediated siRNA or siRNA demethylation. This Brassica napus (Rape) protein is Replicase large subunit.